A 76-amino-acid polypeptide reads, in one-letter code: Small ribosomal subunit protein bS18 (76 aa).

Belongs to the bacterial ribosomal protein bS18 family. As to quaternary structure, part of the 30S ribosomal subunit. Forms a tight heterodimer with protein bS6.

Functionally, binds as a heterodimer with protein bS6 to the central domain of the 16S rRNA, where it helps stabilize the platform of the 30S subunit. This chain is Small ribosomal subunit protein bS18, found in Aeromonas hydrophila subsp. hydrophila (strain ATCC 7966 / DSM 30187 / BCRC 13018 / CCUG 14551 / JCM 1027 / KCTC 2358 / NCIMB 9240 / NCTC 8049).